Consider the following 150-residue polypeptide: Large ribosomal subunit protein bL9 (150 aa).

Belongs to the bacterial ribosomal protein bL9 family.

Functionally, binds to the 23S rRNA. The protein is Large ribosomal subunit protein bL9 of Streptococcus sanguinis (strain SK36).